The chain runs to 249 residues: MAGHSQFANIKHRKGAQDAKRAQKFTKLIREIIVATKQGLPDPEFNSRLRSAIITAKKENLPKDRIDAAIKTASGNNQHDNFEEVVYEGYGPGNIALIIQTLTNNRNRTAAELRHALSKYNGKLGESGSVSFLFNHVGLIAYKASSINSFDTLFNTAIELQALDVEENDYDEEKMYYVTCNIQDFGNVRDQLFKKFSDAEFSRLFWKPINITTIDDEELQKRILNLMDVLENNDDVQHVDSNFIFNTKI.

Residues 1-21 (MAGHSQFANIKHRKGAQDAKR) form a disordered region.

The protein belongs to the TACO1 family.

The protein localises to the cytoplasm. This is Probable transcriptional regulatory protein ERGA_CDS_03720 from Ehrlichia ruminantium (strain Gardel).